Here is a 32-residue protein sequence, read N- to C-terminus: Periplasmic [NiFeSe] hydrogenase small subunit (32 aa).

C18 and C21 together coordinate [4Fe-4S] cluster.

Belongs to the [NiFe]/[NiFeSe] hydrogenase small subunit family. In terms of assembly, heterodimer of a large and a small subunit. [3Fe-4S] cluster serves as cofactor. Requires [4Fe-4S] cluster as cofactor.

It localises to the periplasm. The catalysed reaction is H2 + A = AH2. The sequence is that of Periplasmic [NiFeSe] hydrogenase small subunit from Desulfomicrobium norvegicum (strain DSM 1741 / NCIMB 8310) (Desulfovibrio baculatus (strain Norway 4)).